Reading from the N-terminus, the 315-residue chain is MRKRARIIYNPTSGKEQFKRELPDALIKLEKAGYETSAYATEKIGDATLEAERAMHENYDVLIAAGGDGTLNEVVNGIAEKPNRPKLGVIPMGTVNDFGRALHIPNDIMGALDVIIEGHSTKVDIGKMNNRYFINLAAGGQLTQVSYETPSKLKSIVGPFAYYIKGFEMLPQMKAVDLRIEYDGNVFQGEALLFFLGLTNSMAGFEKLVPDAKLDDGYFTLIIVEKSNLAELGHIMTLASRGEHTKHPKVIYEKAKAINISSFTDLQLNVDGEYGGKLPANFLNLERHIDVFAPNDIVNEELINNDHVDDNLIEE.

The DAGKc domain maps to 1–132 (MRKRARIIYN…VDIGKMNNRY (132 aa)). ATP-binding positions include 10–14 (NPTSG), Thr41, 67–73 (GDGTLNE), and Thr94. Residues Lys213, Asp216, and Tyr218 each coordinate Mg(2+). The Proton acceptor role is filled by Glu273.

The protein belongs to the diacylglycerol/lipid kinase family. In terms of assembly, homodimer. The cofactor is Mg(2+).

The catalysed reaction is a 1,2-diacyl-sn-glycerol + ATP = a 1,2-diacyl-sn-glycero-3-phosphate + ADP + H(+). Catalyzes the phosphorylation of diacylglycerol (DAG) into phosphatidic acid. Is a key enzyme involved in the production of lipoteichoic acid by reintroducing DAG formed from the breakdown of membrane phospholipids into the phosphatidylglycerol biosynthetic pathway. The sequence is that of Diacylglycerol kinase (dagK) from Staphylococcus aureus (strain MRSA252).